The sequence spans 148 residues: MTIWVDADACPKMIKDILFRAAIRTNTNLILVANSYLTYPNSPFIRSVLVEKGYDRADHYITSHMKAKDLVITADIPLAAEVIVKQGLAMSPRGELFTANNIKQRLTLRDINEQLRSAGERTGGPSALSAKEKTNFANALDRWLVKSK.

This sequence belongs to the UPF0178 family.

This chain is UPF0178 protein LPC_0108, found in Legionella pneumophila (strain Corby).